Here is a 538-residue protein sequence, read N- to C-terminus: ESX-3 secretion system ATPase EccB3 (538 aa).

A compositionally biased stretch (basic and acidic residues) spans 1–16 (MTNQQHDHDFDHDRRS). The interval 1–25 (MTNQQHDHDFDHDRRSFASRTPVNN) is disordered. The helical transmembrane segment at 75 to 95 (VLMGVLIVITGLIGSFVFSLI) threads the bilayer.

It belongs to the EccB family. As to quaternary structure, part of the ESX-3 / type VII secretion system (T7SS), which is composed of cytosolic and membrane components. The ESX-3 membrane complex is composed of EccB3, EccC3, EccD3 and EccE3.

The protein resides in the cell inner membrane. Its function is as follows. An ATPase. Part of the ESX-3 specialized secretion system, which is important for iron and zinc uptake or homeostasis. In Mycobacterium tuberculosis (strain CDC 1551 / Oshkosh), this protein is ESX-3 secretion system ATPase EccB3.